A 449-amino-acid chain; its full sequence is Tubulin beta chain (449 aa).

Residues Gln11, Glu69, Ser138, Gly142, Thr143, Gly144, Asn204, and Asn226 each contribute to the GTP site. Glu69 serves as a coordination point for Mg(2+). Residues Gln426–Ala449 form a disordered region. The segment covering Thr429 to Met443 has biased composition (acidic residues).

The protein belongs to the tubulin family. In terms of assembly, dimer of alpha and beta chains. A typical microtubule is a hollow water-filled tube with an outer diameter of 25 nm and an inner diameter of 15 nM. Alpha-beta heterodimers associate head-to-tail to form protofilaments running lengthwise along the microtubule wall with the beta-tubulin subunit facing the microtubule plus end conferring a structural polarity. Microtubules usually have 13 protofilaments but different protofilament numbers can be found in some organisms and specialized cells. Mg(2+) is required as a cofactor.

The protein localises to the cytoplasm. Its subcellular location is the cytoskeleton. Tubulin is the major constituent of microtubules, a cylinder consisting of laterally associated linear protofilaments composed of alpha- and beta-tubulin heterodimers. Microtubules grow by the addition of GTP-tubulin dimers to the microtubule end, where a stabilizing cap forms. Below the cap, tubulin dimers are in GDP-bound state, owing to GTPase activity of alpha-tubulin. The sequence is that of Tubulin beta chain from Eimeria tenella (Coccidian parasite).